We begin with the raw amino-acid sequence, 147 residues long: Truncated RecQ DNA helicase-like protein C212.06c (147 aa).

Residues 1-72 (MGVRLVVHYR…CVRSFLASEM (72 aa)) form the Helicase C-terminal domain. A disordered region spans residues 100 to 147 (ETPKPAIATHSRYNASFSSSPPPQPGSSSGMSAMNTNTTSTTPVSGKT). Over residues 125-141 (GSSSGMSAMNTNTTSTT) the composition is skewed to low complexity.

It belongs to the helicase family. RecQ subfamily.

Functionally, truncated ATP-dependent 3'-5' DNA helicase. In Schizosaccharomyces pombe (strain 972 / ATCC 24843) (Fission yeast), this protein is Truncated RecQ DNA helicase-like protein C212.06c.